The sequence spans 315 residues: GPN-loop GTPase 2 (315 aa).

Residue G12 to T17 coordinates GTP. The Gly-Pro-Asn (GPN)-loop; involved in dimer interface motif lies at G69 to N71. S172 to D175 serves as a coordination point for GTP.

Belongs to the GPN-loop GTPase family. In terms of assembly, heterodimers with gpn1 or fet5/gpn3. Binds to RNA polymerase II (RNAPII).

It localises to the cytoplasm. It is found in the nucleus. Its function is as follows. Small GTPase required for proper nuclear import of RNA polymerase II and III (RNAPII and RNAPIII). May act at an RNAP assembly step prior to nuclear import. This Schizosaccharomyces pombe (strain 972 / ATCC 24843) (Fission yeast) protein is GPN-loop GTPase 2.